The sequence spans 274 residues: Type III pantothenate kinase (274 aa).

6 to 13 (DVGNTNTV) contacts ATP. Substrate is bound by residues Tyr-110 and 117-120 (GADR). Asp-119 acts as the Proton acceptor in catalysis. Residue Asp-139 participates in K(+) binding. Thr-142 lines the ATP pocket. Residue Thr-194 coordinates substrate.

This sequence belongs to the type III pantothenate kinase family. As to quaternary structure, homodimer. NH4(+) is required as a cofactor. Requires K(+) as cofactor.

It is found in the cytoplasm. The catalysed reaction is (R)-pantothenate + ATP = (R)-4'-phosphopantothenate + ADP + H(+). The protein operates within cofactor biosynthesis; coenzyme A biosynthesis; CoA from (R)-pantothenate: step 1/5. Functionally, catalyzes the phosphorylation of pantothenate (Pan), the first step in CoA biosynthesis. This is Type III pantothenate kinase from Koribacter versatilis (strain Ellin345).